Here is a 152-residue protein sequence, read N- to C-terminus: Regulatory protein RecX (152 aa).

This sequence belongs to the RecX family.

The protein resides in the cytoplasm. In terms of biological role, modulates RecA activity. This Chromohalobacter salexigens (strain ATCC BAA-138 / DSM 3043 / CIP 106854 / NCIMB 13768 / 1H11) protein is Regulatory protein RecX.